Here is a 240-residue protein sequence, read N- to C-terminus: MPKPADHRNHAAVSTSVLSALFLGAGAALLSACSSPQHASTVPGTTPSIWTGSPAPSGLSGHDEESPGAQSLTSTLTAPDGTKVATAKFEFANGYATVTIATTGVGKLTPGFHGLHIHQVGKCEPNSVAPTGGAPGNFLSAGGHYHVPGHTGTPASGDLASLQVRGDGSAMLVTTTDAFTMDDLLSGAKTAIIIHAGADNFANIPPERYVQVNGTPGPDETTLTTGDAGKRVACGVIGSG.

Residues 1–32 (MPKPADHRNHAAVSTSVLSALFLGAGAALLSA) form the signal peptide. Cysteine 33 carries N-palmitoyl cysteine lipidation. Cysteine 33 is lipidated: S-diacylglycerol cysteine. Composition is skewed to polar residues over residues 36-51 (PQHA…SIWT) and 68-77 (GAQSLTSTLT). The disordered stretch occupies residues 36-77 (PQHASTVPGTTPSIWTGSPAPSGLSGHDEESPGAQSLTSTLT). Cu cation-binding residues include histidine 116 and histidine 118. Residues cysteine 123 and cysteine 234 are joined by a disulfide bond. Zn(2+) is bound by residues histidine 146 and aspartate 158. Residue histidine 195 participates in Cu cation binding.

Belongs to the Cu-Zn superoxide dismutase family. It depends on Cu cation as a cofactor. Zn(2+) serves as cofactor.

It is found in the cell membrane. The catalysed reaction is 2 superoxide + 2 H(+) = H2O2 + O2. Its activity is regulated as follows. Inhibited by the copper chelator diethyl dithiocarbamate. Functionally, destroys radicals which are normally produced within the cells and which are toxic to biological systems. May play a role in favoring mycobacterial survival in phagocytes. The chain is Superoxide dismutase [Cu-Zn] (sodC) from Mycobacterium bovis (strain ATCC BAA-935 / AF2122/97).